The primary structure comprises 346 residues: Phosphate acyltransferase (346 aa).

This sequence belongs to the PlsX family. In terms of assembly, homodimer. Probably interacts with PlsY.

The protein localises to the cytoplasm. The enzyme catalyses a fatty acyl-[ACP] + phosphate = an acyl phosphate + holo-[ACP]. The protein operates within lipid metabolism; phospholipid metabolism. Its function is as follows. Catalyzes the reversible formation of acyl-phosphate (acyl-PO(4)) from acyl-[acyl-carrier-protein] (acyl-ACP). This enzyme utilizes acyl-ACP as fatty acyl donor, but not acyl-CoA. The polypeptide is Phosphate acyltransferase (Geotalea daltonii (strain DSM 22248 / JCM 15807 / FRC-32) (Geobacter daltonii)).